The chain runs to 237 residues: Histone H1E (237 aa).

Residues 1–21 (MSDPAQEVEAPVEAAPVASSP) are compositionally biased toward low complexity. 2 disordered regions span residues 1–56 (MSDP…PVSE) and 109–237 (LQAK…KKAK). The segment covering 26-42 (EKAPKAPKAEKPKSDKP) has biased composition (basic and acidic residues). The H15 domain maps to 50 to 124 (THPPVSEMVV…GASGSFKLPP (75 aa)). A compositionally biased stretch (low complexity) spans 182-195 (AKPAAKKAAAPKPK). Residues 200-209 (PKKEVKPKKE) are compositionally biased toward basic and acidic residues. Basic residues predominate over residues 210-237 (AKPKKAAAKPAKKPAAKPAKKPAAKKAK).

The protein belongs to the histone H1/H5 family.

The protein resides in the nucleus. The protein localises to the chromosome. In terms of biological role, histones H1 are necessary for the condensation of nucleosome chains into higher-order structures. This is Histone H1E from Chironomus tentans (Midge).